Consider the following 581-residue polypeptide: Lipoprotein LpqB (581 aa).

Residues 1 to 23 (MRNHVSRYLTALIAVGCAATTAA) form the signal peptide. The N-palmitoyl cysteine moiety is linked to residue cysteine 24. A lipid anchor (S-diacylglycerol cysteine) is attached at cysteine 24.

This sequence belongs to the LpqB lipoprotein family.

The protein localises to the cell membrane. The polypeptide is Lipoprotein LpqB (Corynebacterium diphtheriae (strain ATCC 700971 / NCTC 13129 / Biotype gravis)).